Here is a 1682-residue protein sequence, read N- to C-terminus: PHD and RING finger domain-containing protein 1 (1682 aa).

The segment at 1–81 (MDDDNLDELV…SGSEDSEDGV (81 aa)) is disordered. The segment covering 41-81 (DSEDDTGSEQDDDTDGEETEGLSEEEDPEDRSGSEDSEDGV) has biased composition (acidic residues). The RING-type; degenerate zinc finger occupies 109–150 (CPICLNAFRDQAVGTPETCAHYFCLDCIIEWSRNANSCPVDR). Residues 185–235 (PTFCEVCGRSDREDRLLLCDGCDAGYHMECLDPPLQEVPVDEWFCPECTVP) form a PHD-type zinc finger. Disordered regions lie at residues 330–412 (PLTP…SMPS), 444–483 (PFDSNEEQSADPPSPLSAKRRVLSRSALQSHQPVARPVAM), 532–582 (SLSA…RQPN), 605–774 (VRSD…GSSF), and 825–856 (LKSEIYDPFDPTGSDSSPPSSSPESLGPGLLP). Thr332 bears the Phosphothreonine mark. 2 stretches are compositionally biased toward basic residues: residues 336–361 (PAKRKRKAGRRKKVLGRKKTRSRSSV) and 369–384 (RAKKRQHRVRKTKGRK). Phosphoserine occurs at positions 447 and 457. Composition is skewed to polar residues over residues 609–620 (PSLTPRSGLSRT), 630–667 (THSSSPQLNGSNVRVSSASTKIVTHSSFPSKNTASGLP), and 734–748 (SSRGPQETGSHTSGS). Residues 832-856 (PFDPTGSDSSPPSSSPESLGPGLLP) show a composition bias toward low complexity. Phosphoserine is present on residues Ser845, Ser846, Ser864, Ser867, Ser919, Ser982, and Ser1000. Disordered stretches follow at residues 911 to 1225 (SKGS…VSEV) and 1288 to 1322 (DDMSSPPSPESTDSSPERDFPPNPILPPASLPQDS). Acidic residues predominate over residues 919-931 (SDLEQEGLGEIEP). Over residues 999–1008 (SSRSRSTSSS) the composition is skewed to low complexity. Composition is skewed to basic residues over residues 1009–1030 (RSRKKTKKKKKKVAREHQRTRS) and 1053–1063 (RRHRAKTKSRR). Over residues 1064–1090 (SSSDRASSQDRAKRRKDRDDRDREHRR) the composition is skewed to basic and acidic residues. Composition is skewed to basic residues over residues 1091–1104 (GSWGHGRCRRKSRS) and 1119–1129 (SKRRKRRHSGS). Ser1135 carries the phosphoserine modification. Composition is skewed to basic and acidic residues over residues 1147 to 1161 (RSRERMDKQESVTRS) and 1182 to 1197 (PSREKRAHSPEKKGPV). Ser1201 bears the Phosphoserine mark. Residues 1288 to 1301 (DDMSSPPSPESTDS) show a composition bias toward low complexity. Over residues 1308–1317 (PPNPILPPAS) the composition is skewed to pro residues. Phosphoserine is present on residues Ser1368 and Ser1379. Residue Thr1412 is modified to Phosphothreonine. 4 disordered regions span residues 1419–1445 (EHSTPAALDRDPRTPLQRPQRPQEGDW), 1463–1496 (LPPPIHVLQESGLPDADPSQPPGAPRAEGLPAAG), 1567–1588 (AVPTTNNSEERTATPKTAAEKT), and 1663–1682 (MRRHKKTEGGEEPPTQGAET). The segment covering 1574-1588 (SEERTATPKTAAEKT) has biased composition (basic and acidic residues). Residues 1585-1612 (AEKTKKEEYMKKLHMQERAVEEVKLAIK) adopt a coiled-coil conformation.

As to quaternary structure, interacts with POLR2A (via the C-terminal domain).

This Mus musculus (Mouse) protein is PHD and RING finger domain-containing protein 1.